Here is a 360-residue protein sequence, read N- to C-terminus: Photosystem II protein D1 (360 aa).

3 consecutive transmembrane segments (helical) span residues 29-46, 118-133, and 142-156; these read YIGW…TATS, HFLL…EWEL, and WIFV…AASA. Position 118 (H118) interacts with chlorophyll a. Y126 provides a ligand contact to pheophytin a. [CaMn4O5] cluster is bound by residues D170 and E189. Residues 197 to 218 traverse the membrane as a helical segment; it reads FHMAGVAGVFGGSLFSAMHGSL. Position 198 (H198) interacts with chlorophyll a. Residues H215 and 264-265 each bind a quinone; that span reads SF. Residue H215 coordinates Fe cation. H272 contributes to the Fe cation binding site. Residues 274–288 traverse the membrane as a helical segment; it reads FLALWPVLGIWLTAM. The [CaMn4O5] cluster site is built by H332, E333, D342, and A344. Positions 345-360 are excised as a propeptide; the sequence is SGDVLPVAFTAPAVNA.

The protein belongs to the reaction center PufL/M/PsbA/D family. As to quaternary structure, PSII is composed of 1 copy each of membrane proteins PsbA, PsbB, PsbC, PsbD, PsbE, PsbF, PsbH, PsbI, PsbJ, PsbK, PsbL, PsbM, PsbT, PsbX, PsbY, PsbZ, Psb30/Ycf12, at least 3 peripheral proteins of the oxygen-evolving complex and a large number of cofactors. It forms dimeric complexes. It depends on The D1/D2 heterodimer binds P680, chlorophylls that are the primary electron donor of PSII, and subsequent electron acceptors. It shares a non-heme iron and each subunit binds pheophytin, quinone, additional chlorophylls, carotenoids and lipids. D1 provides most of the ligands for the Mn4-Ca-O5 cluster of the oxygen-evolving complex (OEC). There is also a Cl(-1) ion associated with D1 and D2, which is required for oxygen evolution. The PSII complex binds additional chlorophylls, carotenoids and specific lipids. as a cofactor. Tyr-161 forms a radical intermediate that is referred to as redox-active TyrZ, YZ or Y-Z. In terms of processing, C-terminally processed by CTPA; processing is essential to allow assembly of the oxygen-evolving complex and thus photosynthetic growth.

Its subcellular location is the plastid. It localises to the chloroplast thylakoid membrane. The enzyme catalyses 2 a plastoquinone + 4 hnu + 2 H2O = 2 a plastoquinol + O2. Photosystem II (PSII) is a light-driven water:plastoquinone oxidoreductase that uses light energy to abstract electrons from H(2)O, generating O(2) and a proton gradient subsequently used for ATP formation. It consists of a core antenna complex that captures photons, and an electron transfer chain that converts photonic excitation into a charge separation. The D1/D2 (PsbA/PsbD) reaction center heterodimer binds P680, the primary electron donor of PSII as well as several subsequent electron acceptors. This chain is Photosystem II protein D1, found in Thalassiosira pseudonana (Marine diatom).